Here is a 229-residue protein sequence, read N- to C-terminus: Protein GrpE (229 aa).

The segment at 1–89 (MSDFNKDDYL…AEGSSLTPLG (89 aa)) is disordered. The span at 24–36 (ASPDADGADAPSD) shows a compositional bias: low complexity. The segment covering 39-50 (EQLKDDMLKDAA) has biased composition (basic and acidic residues). The segment covering 65-84 (KAAAEATADAASDGDAEGSS) has biased composition (low complexity).

It belongs to the GrpE family. Homodimer.

It is found in the cytoplasm. Its function is as follows. Participates actively in the response to hyperosmotic and heat shock by preventing the aggregation of stress-denatured proteins, in association with DnaK and GrpE. It is the nucleotide exchange factor for DnaK and may function as a thermosensor. Unfolded proteins bind initially to DnaJ; upon interaction with the DnaJ-bound protein, DnaK hydrolyzes its bound ATP, resulting in the formation of a stable complex. GrpE releases ADP from DnaK; ATP binding to DnaK triggers the release of the substrate protein, thus completing the reaction cycle. Several rounds of ATP-dependent interactions between DnaJ, DnaK and GrpE are required for fully efficient folding. This chain is Protein GrpE, found in Bifidobacterium animalis subsp. lactis (strain AD011).